A 551-amino-acid polypeptide reads, in one-letter code: Thermophilic beta-amylase (551 aa).

The signal sequence occupies residues 1 to 32 (MIGAFKRLGQKLFLTLLTASLIFASSIVTANA). Aspartate 73 contacts substrate. Glutamate 80 lines the Ca(2+) pocket. 2 residues coordinate substrate: histidine 113 and aspartate 121. Glutamate 167 contacts Ca(2+). The Proton donor role is filled by glutamate 195. Positions 310, 315, and 353 each coordinate substrate. The active-site Proton acceptor is glutamate 392. Substrate contacts are provided by residues 393-394 (NA) and arginine 423. Residues 448–551 (LTPNGTIPVT…TGSVTITWQN (104 aa)) form the CBM20 domain.

Belongs to the glycosyl hydrolase 14 family. As to quaternary structure, monomer. Ca(2+) is required as a cofactor.

It catalyses the reaction Hydrolysis of (1-&gt;4)-alpha-D-glucosidic linkages in polysaccharides so as to remove successive maltose units from the non-reducing ends of the chains.. This is Thermophilic beta-amylase from Thermoanaerobacterium thermosulfurigenes (Clostridium thermosulfurogenes).